Reading from the N-terminus, the 72-residue chain is Large ribosomal subunit protein bL31 (72 aa).

Zn(2+) contacts are provided by Cys16, Cys18, Cys37, and Cys40.

This sequence belongs to the bacterial ribosomal protein bL31 family. Type A subfamily. In terms of assembly, part of the 50S ribosomal subunit. The cofactor is Zn(2+).

In terms of biological role, binds the 23S rRNA. This is Large ribosomal subunit protein bL31 from Buchnera aphidicola subsp. Acyrthosiphon pisum (strain APS) (Acyrthosiphon pisum symbiotic bacterium).